Reading from the N-terminus, the 460-residue chain is V-type ATP synthase beta chain (460 aa).

The protein belongs to the ATPase alpha/beta chains family.

Its function is as follows. Produces ATP from ADP in the presence of a proton gradient across the membrane. The V-type beta chain is a regulatory subunit. The chain is V-type ATP synthase beta chain from Dictyoglomus turgidum (strain DSM 6724 / Z-1310).